The following is a 353-amino-acid chain: UPF0283 membrane protein YcjF (353 aa).

Over residues 1–19 the composition is skewed to basic and acidic residues; sequence MSEPLKPRIDFAEPLKEEP. The interval 1 to 35 is disordered; sequence MSEPLKPRIDFAEPLKEEPTSAFKAQQTFSEAESR. 3 helical membrane-spanning segments follow: residues 70–90, 100–120, and 213–233; these read MVMG…IQWT, VALG…GSVV, and ESTL…FIAW.

It belongs to the UPF0283 family.

Its subcellular location is the cell inner membrane. This chain is UPF0283 membrane protein YcjF, found in Salmonella agona (strain SL483).